The chain runs to 104 residues: Sweet protein mabinlin-1 (104 aa).

4 disulfide bridges follow: Cys4–Cys53, Cys17–Cys42, Cys43–Cys91, and Cys55–Cys99.

It belongs to the 2S seed storage albumins family. Heterodimer of a small A and a large B chain linked by disulfide bonds.

In terms of biological role, 2S seed storage protein having sweetness-inducing activity. This form is not heat stable. The polypeptide is Sweet protein mabinlin-1 (Capparis masaikai (Mabinlang)).